A 339-amino-acid polypeptide reads, in one-letter code: Homocysteine S-methyltransferase 2 (339 aa).

Residues 12–326 form the Hcy-binding domain; the sequence is AVRRWVDAAG…NTIRAIHRTL (315 aa). C244, C311, and C312 together coordinate Zn(2+).

Monomer. Requires Zn(2+) as cofactor.

The catalysed reaction is S-methyl-L-methionine + L-homocysteine = 2 L-methionine + H(+). Catalyzes methyl transfer from S-methylmethionine (SMM) to adenosyl-L-homocysteine (AdoMet). SMM degradation (by HMT-1, HMT-2, HMT-3 and HMT-4) and biosynthesis (by MMT1) constitute the SMM cycle in plants, which is probably required to achieve short term control of AdoMet level. The protein is Homocysteine S-methyltransferase 2 (HMT-2) of Zea mays (Maize).